The sequence spans 623 residues: Adenine deaminase 2 (623 aa).

Belongs to the metallo-dependent hydrolases superfamily. Adenine deaminase family. Requires Mn(2+) as cofactor.

It catalyses the reaction adenine + H2O + H(+) = hypoxanthine + NH4(+). The chain is Adenine deaminase 2 from Jannaschia sp. (strain CCS1).